The chain runs to 370 residues: Vasopressin V2 receptor (370 aa).

Residues 1 to 28 (MLRATTSAVPRALSWPAAPGNGSEREPL) are disordered. The Extracellular segment spans residues 1–37 (MLRATTSAVPRALSWPAAPGNGSEREPLDDRDPLLAR). N-linked (GlcNAc...) asparagine glycosylation is present at N21. Residues 38–62 (VELALLSTVFVAVALSNGLVLGALV) form a helical membrane-spanning segment. Residues 63–76 (RRGRRGRWAPMHVF) lie on the Cytoplasmic side of the membrane. A helical transmembrane segment spans residues 77–97 (IGHLCLADLAVALFQVLPQLA). Topologically, residues 98 to 112 (WDATYRFRGPDALCR) are extracellular. A helical transmembrane segment spans residues 113–134 (AVKYLQMVGMYASSYMILAMTL). Residues 135-158 (DRHRAICRPMLAYRHGGGARWNRP) lie on the Cytoplasmic side of the membrane. A helical membrane pass occupies residues 159–179 (VLVAWAFSLLLSLPQLFIFAQ). Residues 180 to 199 (RDVGDGSGVLDCWASFAEPW) lie on the Extracellular side of the membrane. The chain crosses the membrane as a helical span at residues 200-219 (GLRAYVTWIALMVFVAPALG). The Cytoplasmic portion of the chain corresponds to 220-270 (IAACQVLIFREIHTSLVPGPAERAGGHRGGRRAGSPREGARVSAAMAKTAR). The chain crosses the membrane as a helical span at residues 271 to 292 (MTLVIVAVYVLCWAPFFLVQLW). The Extracellular portion of the chain corresponds to 293-307 (SVWDPKAPREGPPFV). Residues 308 to 327 (LLMLLASLNSCTNPWIYASF) traverse the membrane as a helical segment. Residues 328-370 (SSSISSELRSLLCCPRRRTPPSLRPQEESCATASSFSARDTSS) lie on the Cytoplasmic side of the membrane. S-palmitoyl cysteine attachment occurs at residues C340 and C341. Residues 347–370 (PPSLRPQEESCATASSFSARDTSS) form a disordered region. Positions 356-370 (SCATASSFSARDTSS) are enriched in polar residues.

The protein belongs to the G-protein coupled receptor 1 family. Vasopressin/oxytocin receptor subfamily. As to quaternary structure, interacts with ARRDC4. Identified in a complex containing at least ARRDC4, V2R and HGS. Interacts with TMEM147.

It is found in the cell membrane. In terms of biological role, receptor for arginine vasopressin. The activity of this receptor is mediated by G proteins which activate adenylate cyclase. Involved in renal water reabsorption. The protein is Vasopressin V2 receptor (AVPR2) of Sus scrofa (Pig).